The chain runs to 288 residues: ATP synthase gamma chain (288 aa).

The protein belongs to the ATPase gamma chain family. In terms of assembly, F-type ATPases have 2 components, CF(1) - the catalytic core - and CF(0) - the membrane proton channel. CF(1) has five subunits: alpha(3), beta(3), gamma(1), delta(1), epsilon(1). CF(0) has three main subunits: a, b and c.

It is found in the cell inner membrane. Produces ATP from ADP in the presence of a proton gradient across the membrane. The gamma chain is believed to be important in regulating ATPase activity and the flow of protons through the CF(0) complex. The sequence is that of ATP synthase gamma chain from Rickettsia akari (strain Hartford).